A 314-amino-acid polypeptide reads, in one-letter code: MSASLAINFLNHTYENPFMNASGVHCMSTKELDELKDSRAGAFITKSSTTSKREGNPEPRYFSVPLGSINSMGLPNEGFDYYLKYALEYQKNGSTSTPLFFSVAGMSVEENLKMLQKIQDSDFNGITELNLSCPNVPGKPQVAYDFELTKEILTKVFEFFKKPLGVKLPPYFDFAHFDIMAGILNQLPLSYVNCINSIGNGLYINVETESVVVKPKNGFGGIGGEYVKPTALANVRAFYTRLNPTIKIIGTGGIKTGQDAFEHLLCGATMLQVGTELYKEGVSIFDRLERELKELMDKKGYTSIEQFRGKLNSL.

Residues K46, N70–L74, and N130 each bind substrate. An FMN-binding site is contributed by K46 to S47. N130 provides a ligand contact to FMN. Active-site nucleophile residues include S132 and C133. FMN-binding residues include K167 and I195. N196–S197 lines the substrate pocket. FMN is bound by residues G224, G252–G253, and G274–T275.

The protein belongs to the dihydroorotate dehydrogenase family. Type 1 subfamily. Homodimer. FMN is required as a cofactor.

The protein resides in the cytoplasm. The enzyme catalyses (S)-dihydroorotate + fumarate = orotate + succinate. It functions in the pathway pyrimidine metabolism; UMP biosynthesis via de novo pathway. Its activity is regulated as follows. The activity is independent of the presence of oxygen. Functionally, catalyzes the conversion of dihydroorotate to orotate with fumarate as the electron acceptor. This Lachancea kluyveri (strain ATCC 58438 / CBS 3082 / BCRC 21498 / NBRC 1685 / JCM 7257 / NCYC 543 / NRRL Y-12651) (Yeast) protein is Dihydroorotate dehydrogenase (fumarate) (URA1).